The chain runs to 293 residues: Pyridoxal 5'-phosphate synthase subunit PdxS (293 aa).

D-ribose 5-phosphate is bound at residue Asp-23. The active-site Schiff-base intermediate with D-ribose 5-phosphate is Lys-80. Residue Gly-152 participates in D-ribose 5-phosphate binding. D-glyceraldehyde 3-phosphate is bound at residue Arg-164. D-ribose 5-phosphate is bound by residues Gly-213 and 234–235 (GS).

The protein belongs to the PdxS/SNZ family. As to quaternary structure, in the presence of PdxT, forms a dodecamer of heterodimers.

The enzyme catalyses aldehydo-D-ribose 5-phosphate + D-glyceraldehyde 3-phosphate + L-glutamine = pyridoxal 5'-phosphate + L-glutamate + phosphate + 3 H2O + H(+). It functions in the pathway cofactor biosynthesis; pyridoxal 5'-phosphate biosynthesis. Functionally, catalyzes the formation of pyridoxal 5'-phosphate from ribose 5-phosphate (RBP), glyceraldehyde 3-phosphate (G3P) and ammonia. The ammonia is provided by the PdxT subunit. Can also use ribulose 5-phosphate and dihydroxyacetone phosphate as substrates, resulting from enzyme-catalyzed isomerization of RBP and G3P, respectively. This is Pyridoxal 5'-phosphate synthase subunit PdxS from Roseiflexus sp. (strain RS-1).